Consider the following 304-residue polypeptide: Sulfate adenylyltransferase subunit 2 (304 aa).

It belongs to the PAPS reductase family. CysD subfamily. In terms of assembly, heterodimer composed of CysD, the smaller subunit, and CysNC.

The enzyme catalyses sulfate + ATP + H(+) = adenosine 5'-phosphosulfate + diphosphate. Its pathway is sulfur metabolism; hydrogen sulfide biosynthesis; sulfite from sulfate: step 1/3. In terms of biological role, with CysN forms the ATP sulfurylase (ATPS) that catalyzes the adenylation of sulfate producing adenosine 5'-phosphosulfate (APS) and diphosphate, the first enzymatic step in sulfur assimilation pathway. APS synthesis involves the formation of a high-energy phosphoric-sulfuric acid anhydride bond driven by GTP hydrolysis by CysN coupled to ATP hydrolysis by CysD. This is Sulfate adenylyltransferase subunit 2 from Xylella fastidiosa (strain Temecula1 / ATCC 700964).